The primary structure comprises 458 residues: Cell division protein FtsZ (458 aa).

Residues 22 to 26 (GAGGN), 109 to 111 (GTG), Glu-140, Arg-144, and Asp-188 each bind GTP. Positions 319–458 (KAEEEASKQP…IPFFKHRRQD (140 aa)) are disordered. Polar residues predominate over residues 368–379 (NTISHEAPTQSI). A compositionally biased stretch (basic and acidic residues) spans 401–418 (KQDRKENNRPQPVENKEK). Over residues 425-439 (SFSSDDSTSISQIET) the composition is skewed to low complexity.

Belongs to the FtsZ family. In terms of assembly, homodimer. Polymerizes to form a dynamic ring structure in a strictly GTP-dependent manner. Interacts directly with several other division proteins.

The protein localises to the cytoplasm. Functionally, essential cell division protein that forms a contractile ring structure (Z ring) at the future cell division site. The regulation of the ring assembly controls the timing and the location of cell division. One of the functions of the FtsZ ring is to recruit other cell division proteins to the septum to produce a new cell wall between the dividing cells. Binds GTP and shows GTPase activity. The sequence is that of Cell division protein FtsZ from Lactobacillus johnsonii (strain CNCM I-12250 / La1 / NCC 533).